The sequence spans 200 residues: Imidazoleglycerol-phosphate dehydratase (200 aa).

It belongs to the imidazoleglycerol-phosphate dehydratase family.

It localises to the cytoplasm. It carries out the reaction D-erythro-1-(imidazol-4-yl)glycerol 3-phosphate = 3-(imidazol-4-yl)-2-oxopropyl phosphate + H2O. It functions in the pathway amino-acid biosynthesis; L-histidine biosynthesis; L-histidine from 5-phospho-alpha-D-ribose 1-diphosphate: step 6/9. The polypeptide is Imidazoleglycerol-phosphate dehydratase (Chlorobium phaeovibrioides (strain DSM 265 / 1930) (Prosthecochloris vibrioformis (strain DSM 265))).